A 62-amino-acid polypeptide reads, in one-letter code: DNA-binding protein 7b (62 aa).

This sequence belongs to the 7 kDa DNA-binding/endoribonuclease P2 family. In terms of assembly, monomer.

The protein localises to the cytoplasm. Functionally, can constrain negative DNA supercoils. May be involved in maintaining the integrity of the genome at high temperature. The polypeptide is DNA-binding protein 7b (Acidianus hospitalis (strain W1)).